Here is a 524-residue protein sequence, read N- to C-terminus: Probable glutamyl-tRNA reductase 3, chloroplastic (524 aa).

A chloroplast-targeting transit peptide spans 1–52 (MAVSNASVVLSPNLETSSSWYHHNPSSSLDLIRIHTLPMNKMTRRGLIQRVR). Substrate is bound by residues 129-132 (TCNR), serine 189, 194-196 (ENQ), and glutamine 200. The active-site Nucleophile is the cysteine 130. 269-274 (GAGEMG) provides a ligand contact to NADP(+).

The protein belongs to the glutamyl-tRNA reductase family.

It localises to the plastid. Its subcellular location is the chloroplast. The catalysed reaction is (S)-4-amino-5-oxopentanoate + tRNA(Glu) + NADP(+) = L-glutamyl-tRNA(Glu) + NADPH + H(+). It functions in the pathway porphyrin-containing compound metabolism; protoporphyrin-IX biosynthesis; 5-aminolevulinate from L-glutamyl-tRNA(Glu): step 1/2. It participates in porphyrin-containing compound metabolism; chlorophyll biosynthesis. Functionally, catalyzes the NADPH-dependent reduction of glutamyl-tRNA(Glu) to glutamate 1-semialdehyde (GSA). In Arabidopsis thaliana (Mouse-ear cress), this protein is Probable glutamyl-tRNA reductase 3, chloroplastic (HEMA3).